The following is a 350-amino-acid chain: MAFKIASSPHVSTTLHTNTVMKRVALCLIPGIAVQSYYFGYGTLVQLLLAITVAYLAEAAVMKLRNRNITATLTDNSALVTASLLAVAIPPLAPWWLIVIGTLFAIVIVKQLYGGLGNNVFNPAMAAYVLLLISFPVQMTSWVAPQTLTVNYADMLHTFNSIFQLNAGYAADFFHLAIDGTTMATPLDTLKTDLSMGLTTTESMTKTIFSGSVGEGWFWVNMAYLVGGLVMLKLKVIRWHISGAIVLTLFVCASIGFLISPDTFVSPIMHLFSGGTMLAAFFIATDPVTAATSPRGRLIFGAMIGLLIYLIRTFGGYPDAVAFAVLLANMCAPFIDYYVRPRSYGHRVGN.

The next 4 membrane-spanning stretches (helical) occupy residues 37 to 57 (YYFG…AYLA), 78 to 109 (ALVT…IVIV), 124 to 144 (AMAA…SWVA), and 158 to 178 (TFNS…HLAI). Residue T185 is modified to FMN phosphoryl threonine. 5 consecutive transmembrane segments (helical) span residues 212-232 (SVGE…LVML), 239-259 (WHIS…GFLI), 264-284 (FVSP…FFIA), 298-318 (LIFG…GGYP), and 319-339 (DAVA…DYYV).

This sequence belongs to the NqrB/RnfD family. The complex is composed of six subunits: RnfA, RnfB, RnfC, RnfD, RnfE and RnfG. It depends on FMN as a cofactor.

Its subcellular location is the cell inner membrane. Its function is as follows. Part of a membrane-bound complex that couples electron transfer with translocation of ions across the membrane. This Shewanella frigidimarina (strain NCIMB 400) protein is Ion-translocating oxidoreductase complex subunit D.